Here is a 775-residue protein sequence, read N- to C-terminus: Putative ankyrin repeat protein RBE_0801 (775 aa).

ANK repeat units follow at residues 66 to 95 (HSLP…ENTE), 300 to 329 (ATTV…KVEN), 331 to 356 (ILQE…IKSF), 357 to 385 (TNDY…NIVG), 447 to 476 (IPDV…SFDF), and 523 to 552 (GDDK…KQGI).

The chain is Putative ankyrin repeat protein RBE_0801 from Rickettsia bellii (strain RML369-C).